Consider the following 187-residue polypeptide: MSFETTAITFFIILLICLICILLLLVVFLYKCFQGRKGKETKKVPCTDANGGVDCAAAKVVTSNPEDHERILMQVMNLNVPMRPGILVQRQSKEVLATPLENRRDMEAEEENQINEKQEPENAGETGQEEDDGLQKIHTSVTRTPSVVESQKRPLKGVTFSREVIVVDLGNEYPTPRSYTREHKERK.

The helical transmembrane segment at 8–28 (ITFFIILLICLICILLLLVVF) threads the bilayer. The interval 99 to 153 (PLENRRDMEAEEENQINEKQEPENAGETGQEEDDGLQKIHTSVTRTPSVVESQKR) is disordered. Over residues 137 to 149 (IHTSVTRTPSVVE) the composition is skewed to polar residues.

It is found in the membrane. This is an uncharacterized protein from Homo sapiens (Human).